The sequence spans 2493 residues: Non-reducing polyketide synthase pkiA (2493 aa).

Positions P129 to I243 are N-terminal acylcarrier protein transacylase domain (SAT). The active-site Nucleophile; for transacylase activity is the C160. The Proton donor/acceptor; for transacylase activity role is filled by H274. Residues E401–Q818 form the Ketosynthase family 3 (KS3) domain. Active-site for beta-ketoacyl synthase activity residues include C567, H702, and H741. The malonyl-CoA:ACP transacylase (MAT) stretch occupies residues C926–Y1261. The tract at residues P1259–C1387 is N-terminal hotdog fold. The PKS/mFAS DH domain occupies P1259–T1562. Residue H1291 is the Proton acceptor; for dehydratase activity of the active site. A product template (PT) domain region spans residues A1297–K1558. A C-terminal hotdog fold region spans residues V1415–T1562. The Proton donor; for dehydratase activity role is filled by D1471. The Carrier domain occupies K1588 to L1662. The residue at position 1622 (S1622) is an O-(pantetheine 4'-phosphoryl)serine. The tract at residues R1822 to E2063 is methyltransferase (CMeT) domain. The interval V2128–I2366 is NADPH-binding domain.

Requires pantetheine 4'-phosphate as cofactor.

The enzyme catalyses decanoyl-[ACP] + 4 malonyl-CoA + AH2 + S-adenosyl-L-methionine + 3 H(+) = 2,4-dihydroxy-3-methyl-6-(2-oxoundecyl)benzaldehyde + holo-[ACP] + A + S-adenosyl-L-homocysteine + 4 CO2 + 4 CoA + H2O. It functions in the pathway secondary metabolite biosynthesis. Non-reducing polyketide synthase; part of the pki gene cluster that mediates the biosynthesis of 2,4-dihydroxy-3-methyl-6-(2-oxoundecyl)benzaldehyde. The first step in the pathway is the generation of the decanoyl starter unit by the FAS composed of subunits pkiB and pkiC, which is then transferred directly from the FAS to the SAT domain of the non-reducing polyketide synthase pkiA. PkiA condenses the decanoyyl starter unit with 4 malonyl-CoA units and performs one methylation step to yield 2,4-dihydroxy-3-methyl-6-(2-oxoundecyl)benzaldehyde. This Emericella nidulans (strain FGSC A4 / ATCC 38163 / CBS 112.46 / NRRL 194 / M139) (Aspergillus nidulans) protein is Non-reducing polyketide synthase pkiA.